The following is a 366-amino-acid chain: Phenylalanine--tRNA ligase alpha subunit (366 aa).

Glu264 is a Mg(2+) binding site.

The protein belongs to the class-II aminoacyl-tRNA synthetase family. Phe-tRNA synthetase alpha subunit type 1 subfamily. As to quaternary structure, tetramer of two alpha and two beta subunits. The cofactor is Mg(2+).

It is found in the cytoplasm. It catalyses the reaction tRNA(Phe) + L-phenylalanine + ATP = L-phenylalanyl-tRNA(Phe) + AMP + diphosphate + H(+). This chain is Phenylalanine--tRNA ligase alpha subunit, found in Zymomonas mobilis subsp. mobilis (strain ATCC 31821 / ZM4 / CP4).